A 1058-amino-acid polypeptide reads, in one-letter code: Carbamoyl phosphate synthase large chain (1058 aa).

The segment at 1-401 is carboxyphosphate synthetic domain; sequence MPKRTDIQKI…SLLKACRSLE (401 aa). Positions 129, 169, 175, 176, 208, 210, 215, 241, 242, 243, 284, and 298 each coordinate ATP. The 195-residue stretch at 133 to 327 folds into the ATP-grasp 1 domain; the sequence is KQLMEELEQP…IAKLAAKIAV (195 aa). The Mg(2+) site is built by Gln284, Glu298, and Asn300. Residues Gln284, Glu298, and Asn300 each coordinate Mn(2+). The tract at residues 402–546 is oligomerization domain; sequence IGVHHNEIPE…YSTYGWENES (145 aa). Residues 547-929 form a carbamoyl phosphate synthetic domain region; that stretch reads IRSDKESVLV…ALYKAFEASY (383 aa). The 191-residue stretch at 671-861 folds into the ATP-grasp 2 domain; the sequence is EQALKELDIP…MAQVATKLIL (191 aa). Positions 707, 746, 748, 752, 777, 778, 779, 780, 820, and 832 each coordinate ATP. Residues Gln820, Glu832, and Asn834 each contribute to the Mg(2+) site. Mn(2+) contacts are provided by Gln820, Glu832, and Asn834. An MGS-like domain is found at 930-1058; that stretch reads LHLPTFGNVV…ESRSFVTEAI (129 aa). The tract at residues 930–1058 is allosteric domain; that stretch reads LHLPTFGNVV…ESRSFVTEAI (129 aa).

It belongs to the CarB family. In terms of assembly, composed of two chains; the small (or glutamine) chain promotes the hydrolysis of glutamine to ammonia, which is used by the large (or ammonia) chain to synthesize carbamoyl phosphate. Tetramer of heterodimers (alpha,beta)4. Mg(2+) serves as cofactor. The cofactor is Mn(2+).

It carries out the reaction hydrogencarbonate + L-glutamine + 2 ATP + H2O = carbamoyl phosphate + L-glutamate + 2 ADP + phosphate + 2 H(+). The catalysed reaction is hydrogencarbonate + NH4(+) + 2 ATP = carbamoyl phosphate + 2 ADP + phosphate + 2 H(+). Its pathway is amino-acid biosynthesis; L-arginine biosynthesis; carbamoyl phosphate from bicarbonate: step 1/1. It participates in pyrimidine metabolism; UMP biosynthesis via de novo pathway; (S)-dihydroorotate from bicarbonate: step 1/3. Its function is as follows. Large subunit of the glutamine-dependent carbamoyl phosphate synthetase (CPSase). CPSase catalyzes the formation of carbamoyl phosphate from the ammonia moiety of glutamine, carbonate, and phosphate donated by ATP, constituting the first step of 2 biosynthetic pathways, one leading to arginine and/or urea and the other to pyrimidine nucleotides. The large subunit (synthetase) binds the substrates ammonia (free or transferred from glutamine from the small subunit), hydrogencarbonate and ATP and carries out an ATP-coupled ligase reaction, activating hydrogencarbonate by forming carboxy phosphate which reacts with ammonia to form carbamoyl phosphate. The sequence is that of Carbamoyl phosphate synthase large chain from Streptococcus pneumoniae (strain P1031).